The sequence spans 102 residues: MIGKEVTVQDIVLELSEVQPEVLPVDLFCEEELPNEDTEEELDTERIVFKVIAPCGCSHCEVKLRVFVQATEFGIRAFQQLLTGDLQLLCPECRGNCEHGGS.

The E7 terminal domain stretch occupies residues 1–44 (MIGKEVTVQDIVLELSEVQPEVLPVDLFCEEELPNEDTEEELDT). Positions 27 to 31 (LFCEE) match the LXCXE motif; interaction with host RB1 and TMEM173/STING motif. Residues 55–93 (CGCSHCEVKLRVFVQATEFGIRAFQQLLTGDLQLLCPEC) fold into a zinc finger. A Nuclear export signal motif is present at residues 75–83 (IRAFQQLLT).

It belongs to the papillomaviridae E7 protein family. Homodimer. Homooligomer. Interacts with host RB1; this interaction induces dissociation of RB1-E2F1 complex thereby disrupting RB1 activity. Interacts with host EP300; this interaction represses EP300 transcriptional activity. Interacts with protein E2; this interaction inhibits E7 oncogenic activity. Interacts with host TMEM173/STING; this interaction impairs the ability of TMEM173/STING to sense cytosolic DNA and promote the production of type I interferon (IFN-alpha and IFN-beta). Highly phosphorylated.

The protein resides in the host cytoplasm. It localises to the host nucleus. In terms of biological role, plays a role in viral genome replication by driving entry of quiescent cells into the cell cycle. Stimulation of progression from G1 to S phase allows the virus to efficiently use the cellular DNA replicating machinery to achieve viral genome replication. E7 protein has both transforming and trans-activating activities. Induces the disassembly of the E2F1 transcription factor from RB1, with subsequent transcriptional activation of E2F1-regulated S-phase genes. Interferes with host histone deacetylation mediated by HDAC1 and HDAC2, leading to transcription activation. Also plays a role in the inhibition of both antiviral and antiproliferative functions of host interferon alpha. Interaction with host TMEM173/STING impairs the ability of TMEM173/STING to sense cytosolic DNA and promote the production of type I interferon (IFN-alpha and IFN-beta). This chain is Protein E7, found in Human papillomavirus 36.